Here is a 94-residue protein sequence, read N- to C-terminus: Putative pterin-4-alpha-carbinolamine dehydratase (94 aa).

It belongs to the pterin-4-alpha-carbinolamine dehydratase family.

The catalysed reaction is (4aS,6R)-4a-hydroxy-L-erythro-5,6,7,8-tetrahydrobiopterin = (6R)-L-erythro-6,7-dihydrobiopterin + H2O. The chain is Putative pterin-4-alpha-carbinolamine dehydratase from Mycolicibacterium smegmatis (strain ATCC 700084 / mc(2)155) (Mycobacterium smegmatis).